The primary structure comprises 318 residues: Protoheme IX farnesyltransferase (318 aa).

9 helical membrane passes run 37 to 57 (LVIF…HPVI), 58 to 78 (AFTA…LNMW), 100 to 120 (VTAR…VMTM), 122 to 142 (VLVN…YLVV), 155 to 175 (IVIG…AVTG), 182 to 202 (FVLF…LALY), 228 to 248 (IMLY…LGFA), 251 to 271 (LYMG…FGIW), and 291 to 311 (ILYL…GLGG).

Belongs to the UbiA prenyltransferase family. Protoheme IX farnesyltransferase subfamily.

It is found in the cell inner membrane. It catalyses the reaction heme b + (2E,6E)-farnesyl diphosphate + H2O = Fe(II)-heme o + diphosphate. It participates in porphyrin-containing compound metabolism; heme O biosynthesis; heme O from protoheme: step 1/1. Converts heme B (protoheme IX) to heme O by substitution of the vinyl group on carbon 2 of heme B porphyrin ring with a hydroxyethyl farnesyl side group. This is Protoheme IX farnesyltransferase from Parvibaculum lavamentivorans (strain DS-1 / DSM 13023 / NCIMB 13966).